A 376-amino-acid polypeptide reads, in one-letter code: Proteasome-interacting protein CIC1 (376 aa).

Disordered stretches follow at residues 1-29 (MAKK…KKSS) and 356-376 (RSSS…KAKS). The interval 310 to 376 (ETHEDDMVTI…ESEAVKKAKS (67 aa)) is required for interaction with CDC4. Residues 357–376 (SSSELEKESSESEAVKKAKS) are compositionally biased toward basic and acidic residues.

In terms of assembly, interacts with CDC4, PRE4, PRE6, RPT1 and SCL1 as part of the fully assembled 26S proteasome. Interacts with pre-ribosomal particles constituent NOP7.

It localises to the nucleus. It is found in the nucleolus. Functionally, an adapter protein that specifically links the 26S proteasome to its substrate CDC4 which is one of the substrate recognition subunits of the SCF E3 ubiquitin ligase complex. Required for turnover of cell cycle regulatory proteins CDC4 and GRR1. Required for synthesis and nuclear export of 60S ribosomal subunits. Required for vegetative growth. The protein is Proteasome-interacting protein CIC1 (CIC1) of Saccharomyces cerevisiae (strain ATCC 204508 / S288c) (Baker's yeast).